Consider the following 425-residue polypeptide: Glutamyl-tRNA reductase (425 aa).

Substrate is bound by residues 51–54, S111, 116–118, and Q122; these read TCNR and DMQ. The active-site Nucleophile is the C52. Position 191-196 (191-196) interacts with NADP(+); the sequence is GLGEIG.

This sequence belongs to the glutamyl-tRNA reductase family. As to quaternary structure, homodimer.

It catalyses the reaction (S)-4-amino-5-oxopentanoate + tRNA(Glu) + NADP(+) = L-glutamyl-tRNA(Glu) + NADPH + H(+). The protein operates within porphyrin-containing compound metabolism; protoporphyrin-IX biosynthesis; 5-aminolevulinate from L-glutamyl-tRNA(Glu): step 1/2. In terms of biological role, catalyzes the NADPH-dependent reduction of glutamyl-tRNA(Glu) to glutamate 1-semialdehyde (GSA). This Cytophaga hutchinsonii (strain ATCC 33406 / DSM 1761 / CIP 103989 / NBRC 15051 / NCIMB 9469 / D465) protein is Glutamyl-tRNA reductase.